A 107-amino-acid chain; its full sequence is MFLDYFALGVLIFVFLVIFYGIIILHDIPYLIAKKRNHPHADAIHVAGWVSLFTLHVIWPFLWIWATLYRPERGWGMQSHDSSVMQLQQRIAGLEKQLADIKSSSAE.

The Cytoplasmic segment spans residues 1-6; it reads MFLDYF. The chain crosses the membrane as a helical span at residues 7–29; it reads ALGVLIFVFLVIFYGIIILHDIP. At 30 to 43 the chain is on the periplasmic side; it reads YLIAKKRNHPHADA. A helical membrane pass occupies residues 44–66; the sequence is IHVAGWVSLFTLHVIWPFLWIWA. Residues 67-107 are Cytoplasmic-facing; it reads TLYRPERGWGMQSHDSSVMQLQQRIAGLEKQLADIKSSSAE.

It to E.coli YibI.

The protein localises to the cell inner membrane. This chain is Inner membrane protein YiaW (yiaW), found in Escherichia coli O157:H7.